A 219-amino-acid chain; its full sequence is Holliday junction branch migration complex subunit RuvA (219 aa).

A domain I region spans residues 1 to 67 (MIGWLRGERI…DDGSSLFGFP (67 aa)). Positions 68–146 (DRRERDLFRV…AWSAEKNSDH (79 aa)) are domain II. The tract at residues 147–161 (SDLSLVDRSDLKSLP) is flexible linker. Positions 162–219 (IEPDPLQDLQLTLSTLGYEDLEIRRAMRAVATGEEVPAANDGDGWLRASLRWLNRPSA) are domain III.

Belongs to the RuvA family. As to quaternary structure, homotetramer. Forms an RuvA(8)-RuvB(12)-Holliday junction (HJ) complex. HJ DNA is sandwiched between 2 RuvA tetramers; dsDNA enters through RuvA and exits via RuvB. An RuvB hexamer assembles on each DNA strand where it exits the tetramer. Each RuvB hexamer is contacted by two RuvA subunits (via domain III) on 2 adjacent RuvB subunits; this complex drives branch migration. In the full resolvosome a probable DNA-RuvA(4)-RuvB(12)-RuvC(2) complex forms which resolves the HJ.

It localises to the cytoplasm. In terms of biological role, the RuvA-RuvB-RuvC complex processes Holliday junction (HJ) DNA during genetic recombination and DNA repair, while the RuvA-RuvB complex plays an important role in the rescue of blocked DNA replication forks via replication fork reversal (RFR). RuvA specifically binds to HJ cruciform DNA, conferring on it an open structure. The RuvB hexamer acts as an ATP-dependent pump, pulling dsDNA into and through the RuvAB complex. HJ branch migration allows RuvC to scan DNA until it finds its consensus sequence, where it cleaves and resolves the cruciform DNA. In Synechococcus sp. (strain CC9311), this protein is Holliday junction branch migration complex subunit RuvA.